A 169-amino-acid chain; its full sequence is Large ribosomal subunit protein bL19m (169 aa).

Residues 1-16 constitute a mitochondrion transit peptide; the sequence is MWSRNVRLLGSWTRSY.

The protein belongs to the bacterial ribosomal protein bL19 family. As to quaternary structure, component of the mitochondrial large ribosomal subunit (mt-LSU). Mature yeast 74S mitochondrial ribosomes consist of a small (37S) and a large (54S) subunit. The 37S small subunit contains a 15S ribosomal RNA (15S mt-rRNA) and 34 different proteins. The 54S large subunit contains a 21S rRNA (21S mt-rRNA) and 46 different proteins.

It is found in the mitochondrion. Its function is as follows. Component of the mitochondrial ribosome (mitoribosome), a dedicated translation machinery responsible for the synthesis of mitochondrial genome-encoded proteins, including at least some of the essential transmembrane subunits of the mitochondrial respiratory chain. The mitoribosomes are attached to the mitochondrial inner membrane and translation products are cotranslationally integrated into the membrane. bL19m is essential for respiration. The protein is Large ribosomal subunit protein bL19m (IMG1) of Saccharomyces cerevisiae (strain ATCC 204508 / S288c) (Baker's yeast).